The sequence spans 121 residues: Large ribosomal subunit protein bL20c (121 aa).

This sequence belongs to the bacterial ribosomal protein bL20 family.

Its subcellular location is the plastid. The protein resides in the chloroplast. Functionally, binds directly to 23S ribosomal RNA and is necessary for the in vitro assembly process of the 50S ribosomal subunit. It is not involved in the protein synthesizing functions of that subunit. This is Large ribosomal subunit protein bL20c from Lotus japonicus (Lotus corniculatus var. japonicus).